Reading from the N-terminus, the 256-residue chain is Enoyl-[acyl-carrier-protein] reductase [NADH] FabI (256 aa).

Residues glycine 13, 19 to 20, 66 to 67, and isoleucine 94 contribute to the NAD(+) site; these read SI and DV. Position 97 (alanine 97) interacts with substrate. Active-site proton acceptor residues include tyrosine 147 and tyrosine 157. NAD(+) is bound by residues lysine 164 and 193 to 197; that span reads IRTLS.

This sequence belongs to the short-chain dehydrogenases/reductases (SDR) family. FabI subfamily. Homotetramer.

The catalysed reaction is a 2,3-saturated acyl-[ACP] + NAD(+) = a (2E)-enoyl-[ACP] + NADH + H(+). The protein operates within lipid metabolism; fatty acid biosynthesis. Functionally, catalyzes the reduction of a carbon-carbon double bond in an enoyl moiety that is covalently linked to an acyl carrier protein (ACP). Involved in the elongation cycle of fatty acid which are used in the lipid metabolism. The polypeptide is Enoyl-[acyl-carrier-protein] reductase [NADH] FabI (fabI) (Bacillus cereus (strain ATCC 14579 / DSM 31 / CCUG 7414 / JCM 2152 / NBRC 15305 / NCIMB 9373 / NCTC 2599 / NRRL B-3711)).